An 816-amino-acid polypeptide reads, in one-letter code: MLLWSAVRGLSPPRIVPSLLVVVALAGLLPGLRSHGLQLSPTDSTTPDSQPSRERSIGDVTTAPPEVTPESRPVNRSVTEHGMKPRKAFPVLGIDYTHVRTPFEISLWILLACLMKIGFHVIPTISSIVPESCLLIVVGLLVGGLIKGVGEKPPFLQSEVFFLFLLPPIILDAGYFLPLRQFTENLGTILIFAVVGTLWNAFFLGGLMYAVCLVGGEQINNIGLLDNLLFGSIISAVDPVAVLAVFEEIHINELLHILVFGESLLNDAVTVVLYHLFEEFANYDHVGIVDIVLGFLSFFVVALGGVFVGVVYGVIAAFTSRFTAHIRVIEPLFVFLYSYMAYLSAELFHLSGIMALIASGVVMRPYVEANISHKSHTTIKYFLKMWSSVSETLIFIFLGVSTVAGSHHWNWTFVISTLLFCLIARVLGVLGLTWFINKFRIVKLTPKDQFIIAYGGLRGAIAFSLGYLLDKKHFPMCDLFLTAIITVIFFTVFVQGMTIRPLVDLLAVKKKQETKRSINEEIHTQFLDHLLTGIEDICGHYGHHHWKDKLNRFNKKYVKKCLIAGERSKEPQLIAFYHKMEMKQAIELVESGGMGKIPSAVSTVSMQNIHPKALPAERILPALSKDKEEEIRKILRNNLQKTRQRLRSYNRHTLVADPYEEAWNQMLLRRQKARQLEQKINNYLTVPAHKLDSPTMSRARIGSDPLAYEPKADLPVITIDPASPQSPESVDLVNEELKGKVLGLSREPRVAEEAAEEDEDGGIVMRPKEPSSPGTDDVFSPAPSDSPSSQRMQRCLSDPGPHPEPGEGEPFIPKGQ.

Residues 1–98 are Extracellular-facing; it reads MLLWSAVRGL…FPVLGIDYTH (98 aa). Residues 37–50 show a composition bias toward polar residues; sequence LQLSPTDSTTPDSQ. Residues 37–79 form a disordered region; sequence LQLSPTDSTTPDSQPSRERSIGDVTTAPPEVTPESRPVNRSVT. A glycan (N-linked (GlcNAc...) asparagine) is linked at Asn75. Residues 99–121 traverse the membrane as a helical segment; that stretch reads VRTPFEISLWILLACLMKIGFHV. Residues 122-130 are Cytoplasmic-facing; it reads IPTISSIVP. The chain crosses the membrane as a helical span at residues 131-148; it reads ESCLLIVVGLLVGGLIKG. The Extracellular segment spans residues 149-158; it reads VGEKPPFLQS. The helical transmembrane segment at 159–176 threads the bilayer; that stretch reads EVFFLFLLPPIILDAGYF. At 177-186 the chain is on the cytoplasmic side; sequence LPLRQFTENL. The helical transmembrane segment at 187–215 threads the bilayer; sequence GTILIFAVVGTLWNAFFLGGLMYAVCLVG. At 216–222 the chain is on the extracellular side; the sequence is GEQINNI. The chain crosses the membrane as a helical span at residues 223-249; it reads GLLDNLLFGSIISAVDPVAVLAVFEEI. Topologically, residues 250-252 are cytoplasmic; it reads HIN. The chain crosses the membrane as a helical span at residues 253 to 283; it reads ELLHILVFGESLLNDAVTVVLYHLFEEFANY. Residues 284 to 287 lie on the Extracellular side of the membrane; that stretch reads DHVG. Residues 288–322 form a helical membrane-spanning segment; it reads IVDIVLGFLSFFVVALGGVFVGVVYGVIAAFTSRF. The Cytoplasmic portion of the chain corresponds to 323–328; that stretch reads TAHIRV. The chain crosses the membrane as a helical span at residues 329–341; it reads IEPLFVFLYSYMA. Residues 342–350 lie on the Extracellular side of the membrane; it reads YLSAELFHL. Residues 351–371 traverse the membrane as a helical segment; that stretch reads SGIMALIASGVVMRPYVEANI. Residues 372–373 are Cytoplasmic-facing; it reads SH. A helical transmembrane segment spans residues 374–404; it reads KSHTTIKYFLKMWSSVSETLIFIFLGVSTVA. Over 405–410 the chain is Extracellular; that stretch reads GSHHWN. A helical transmembrane segment spans residues 411-438; it reads WTFVISTLLFCLIARVLGVLGLTWFINK. The Cytoplasmic segment spans residues 439-444; sequence FRIVKL. A helical membrane pass occupies residues 445-469; that stretch reads TPKDQFIIAYGGLRGAIAFSLGYLL. The Extracellular portion of the chain corresponds to 470-475; the sequence is DKKHFP. The helical transmembrane segment at 476–505 threads the bilayer; the sequence is MCDLFLTAIITVIFFTVFVQGMTIRPLVDL. Residues 503–545 are interaction with TESC; it reads VDLLAVKKKQETKRSINEEIHTQFLDHLLTGIEDICGHYGHHH. At 506 to 816 the chain is on the cytoplasmic side; the sequence is LAVKKKQETK…EGEPFIPKGQ (311 aa). A PI(4,5)P2-binding region region spans residues 509–516; it reads KKKQETKR. The segment at 515-545 is interaction with CHP2; sequence KRSINEEIHTQFLDHLLTGIEDICGHYGHHH. A confers pH-dependent PI(4,5)P2 binding region spans residues 540-545; it reads HYGHHH. The interval 552–560 is PI(4,5)P2-binding region; the sequence is RFNKKYVKK. 2 positions are modified to phosphoserine: Ser599 and Ser602. At Thr603 the chain carries Phosphothreonine. A phosphoserine mark is found at Ser605 and Ser648. The segment at 633–816 is interaction with TESC; sequence KILRNNLQKT…EGEPFIPKGQ (184 aa). An interaction with CALM1 region spans residues 633–816; sequence KILRNNLQKT…EGEPFIPKGQ (184 aa). The interaction with PPP3CA stretch occupies residues 684–687; it reads LTVP. 3 positions are modified to phosphoserine: Ser693, Ser697, and Ser703. The interval 715–720 is interaction with PPP3CA; the sequence is PVITID. Residues Ser723, Ser726, Ser729, Ser786, Ser788, and Ser797 each carry the phosphoserine modification. Residues 748–816 form a disordered region; it reads PRVAEEAAEE…EGEPFIPKGQ (69 aa). Residues 783–792 show a composition bias toward polar residues; that stretch reads PSDSPSSQRM.

It belongs to the monovalent cation:proton antiporter 1 (CPA1) transporter (TC 2.A.36) family. Homodimer; dimerization is crucial for its function. Oligomer. Interacts with CALM in a calcium-dependent manner. Interacts with TESC. Interacts (via the juxtamembrane region of the cytoplasmic C-terminal domain) with CHP1; the interaction occurs at the plasma membrane in a calcium-dependent manner. Interacts with CHP2; the interaction occurs in a calcium-dependent manner. Interacts with EZR; regulates the cytoskeletal interactions of SLC9A1 and promotes stress fiber formation. Ubiquitinated, leading to its degradation by the proteasome. Ubiquitination is reduced by CHP1. Post-translationally, O-glycosylated. In terms of processing, palmitoylated; may play a major role in SLC9A1 regulation. Phosphorylation at Ser-648 by AKT1 reduces SLC9A1 binding to CALM1. Kidney and intestine.

It localises to the cell membrane. It is found in the basolateral cell membrane. The catalysed reaction is Na(+)(in) + H(+)(out) = Na(+)(out) + H(+)(in). It carries out the reaction Li(+)(out) + H(+)(in) = Li(+)(in) + H(+)(out). The enzyme catalyses Li(+)(in) + Na(+)(out) = Li(+)(out) + Na(+)(in). Activated at acidic pHs. Inhibited by cariporide and eniporide. Phosphatidylinositol 4,5-bisphosphate (PI(4,5)P2) and phosphatidylinositol 3,4,5-trisphosphate (PI(3,4,5)P3) bind and differentially regulate SLC9A1 activity. Its function is as follows. Electroneutral Na(+) /H(+) antiporter that extrudes Na(+) in exchange for external protons driven by the inward sodium ion chemical gradient, protecting cells from acidification that occurs from metabolism. Exchanges intracellular H(+) ions for extracellular Na(+) in 1:1 stoichiometry. Plays a key role in maintening intracellular pH neutral and cell volume, and thus is important for cell growth, proliferation, migration and survival. In addition, can transport lithium Li(+) and functions also as a Na(+)/Li(+) antiporter. SLC9A1 also functions in membrane anchoring and organization of scaffolding complexes that coordinate signaling inputs. This is Sodium/hydrogen exchanger 1 (SLC9A1) from Oryctolagus cuniculus (Rabbit).